The chain runs to 301 residues: F1 operon positive regulatory protein (301 aa).

Residues Asn-8–Ile-107 form the HTH araC/xylS-type domain. 2 DNA-binding regions (H-T-H motif) span residues Asp-26–Val-47 and Ile-74–Phe-97.

Functionally, positive regulator of F1 operon expression. The protein is F1 operon positive regulatory protein (caf1R) of Yersinia pestis.